A 369-amino-acid polypeptide reads, in one-letter code: Ubiquinone biosynthesis protein COQ4, mitochondrial (369 aa).

The N-terminal 28 residues, 1–28 (MTSILGSARPLIQVGPKSRNASTSMSRL), are a transit peptide targeting the mitochondrion. A disordered region spans residues 1 to 70 (MTSILGSARP…NPTNASRHPR (70 aa)). 2 stretches are compositionally biased toward polar residues: residues 19–33 (RNASTSMSRLPSFPT) and 47–66 (YATISPTAPRSSQRNPTNAS). Zn(2+)-binding residues include H198, D199, H202, and E214. Residues 330 to 369 (FSGRAKKGGKRRGWPSKILEHQKAQHQQQQQQQKVDESRN) form a disordered region. A compositionally biased stretch (basic residues) spans 332 to 343 (GRAKKGGKRRGW).

The protein belongs to the COQ4 family. In terms of assembly, component of a multi-subunit COQ enzyme complex, composed of at least COQ3, COQ4, COQ5, COQ6, COQ7 and COQ9. Zn(2+) serves as cofactor.

It localises to the mitochondrion inner membrane. The catalysed reaction is a 4-hydroxy-3-methoxy-5-(all-trans-polyprenyl)benzoate + H(+) = a 2-methoxy-6-(all-trans-polyprenyl)phenol + CO2. It participates in cofactor biosynthesis; ubiquinone biosynthesis. Lyase that catalyzes the C1-decarboxylation of 4-hydroxy-3-methoxy-5-(all-trans-polyprenyl)benzoic acid into 2-methoxy-6-(all-trans-polyprenyl)phenol during ubiquinone biosynthesis. The polypeptide is Ubiquinone biosynthesis protein COQ4, mitochondrial (Mycosarcoma maydis (Corn smut fungus)).